We begin with the raw amino-acid sequence, 476 residues long: Acyl-lipid omega-13 desaturase (476 aa).

Residues 10-75 (GPALPSIPHQ…HLRVLERFRV (66 aa)) enclose the Cytochrome b5 heme-binding domain. The heme site is built by histidine 37 and histidine 60. The next 2 helical transmembrane spans lie at 146–166 (PFVILHCLHVVGLIWSMKLWW) and 168–188 (GAFISAFILPYFLWVLCAAMV). The Histidine box-1 signature appears at 189 to 193 (HDGGH). Residues 224 to 229 (HNILHH) carry the Histidine box-2 motif. Helical transmembrane passes span 267-287 (FFSHLIMYNFAHIGLTMISPL), 315-335 (YHSTVMLQLVTVGAFYITPFL), and 343-363 (LLLTLLPTFMMSVAFMVIAQV). Positions 410–414 (QSLHH) match the Histidine box-3 motif.

It belongs to the fatty acid desaturase type 1 family.

It localises to the membrane. The enzyme catalyses a (9Z,12Z)-octadecadienoyl-containing glycerolipid + 2 Fe(II)-[cytochrome b5] + O2 + 2 H(+) = a (5Z,9Z,12Z)-octadecatrienoyl-containing glycerolipid + 2 Fe(III)-[cytochrome b5] + 2 H2O. It catalyses the reaction (9Z,12Z,15Z)-octadecatrienoyl-containing glycerolipid + 2 Fe(II)-[cytochrome b5] + O2 + 2 H(+) = a (5Z,9Z,12Z,15Z)-octadecatetraenoyl-containing glycerolipid + 2 Fe(III)-[cytochrome b5] + 2 H2O. Its pathway is lipid metabolism; polyunsaturated fatty acid biosynthesis. Its function is as follows. Front-end desaturase having a omega-13 desaturase activity for omega-9 unsaturated C18/C20 fatty acids. Strong substrate preferences for linoleic acid and alpha-linolenic acid for the production of pinolenic and coniferonic acids respectively. No desaturase activity for dihomo gamma-linolenic acid and eicosatertraenoic acid. The polypeptide is Acyl-lipid omega-13 desaturase (Chlamydomonas reinhardtii (Chlamydomonas smithii)).